A 645-amino-acid polypeptide reads, in one-letter code: Cell pattern formation-associated protein stuA (645 aa).

The interval 1-52 is disordered; the sequence is MNQMQPYADVHQPHMSTAAHAPASGPPAGLSHYSYPHQPSMMQPQQQQHQYG. Residues 18–52 are compositionally biased toward low complexity; that stretch reads AAHAPASGPPAGLSHYSYPHQPSMMQPQQQQHQYG. The region spanning 124-230 is the HTH APSES-type domain; sequence RVTATLWEDE…HDIGALLYHP (107 aa). The H-T-H motif DNA-binding region spans 158–179; the sequence is GTKLLNVAGMTRGRRDGILKSE. Residues 246–645 form a disordered region; the sequence is VDRNRRPDSM…HTLAAQRARR (400 aa). 2 stretches are compositionally biased toward polar residues: residues 254–271 and 279–288; these read SMQT…SQAP and MTNSVGSAMS. Low complexity predominate over residues 317-330; that stretch reads SASSMMGMGNQGSS. Residues 336–365 show a composition bias toward polar residues; sequence ANVQQHPQGNQPLSIDTGLSNARSVPTTPA. The segment covering 469–481 has biased composition (low complexity); the sequence is PYNGNRGPYGYNP. Polar residues-rich tracts occupy residues 502 to 542 and 569 to 584; these read SPHQ…NLYN and YASQ…NSSG. Residues 585 to 613 are nuclear localization domain; that stretch reads KRGRDEEDAETYRPDSVQGDDMGGLKRRK. The segment covering 586–597 has biased composition (basic and acidic residues); it reads RGRDEEDAETYR.

It belongs to the EFG1/PHD1/stuA family.

Its subcellular location is the nucleus. In terms of biological role, transcription factor that regulates asexual reproduction. Binds the StuA-response elements (StRE) with the consensus sequence 5'-(A/T)CGCG(T/A)N(A/C)-3' at the promoters of target genes. Regulates the expression of several effector genes (AvrLm1, AvrLm6 and AvrLm4-7) during infection stage. The protein is Cell pattern formation-associated protein stuA of Leptosphaeria maculans (strain JN3 / isolate v23.1.3 / race Av1-4-5-6-7-8) (Blackleg fungus).